Here is a 430-residue protein sequence, read N- to C-terminus: Glutamate-1-semialdehyde 2,1-aminomutase (430 aa).

Residue Lys-265 is modified to N6-(pyridoxal phosphate)lysine.

This sequence belongs to the class-III pyridoxal-phosphate-dependent aminotransferase family. HemL subfamily. Homodimer. The cofactor is pyridoxal 5'-phosphate.

The protein localises to the cytoplasm. It catalyses the reaction (S)-4-amino-5-oxopentanoate = 5-aminolevulinate. It participates in porphyrin-containing compound metabolism; protoporphyrin-IX biosynthesis; 5-aminolevulinate from L-glutamyl-tRNA(Glu): step 2/2. The protein is Glutamate-1-semialdehyde 2,1-aminomutase of Shewanella sp. (strain MR-7).